Here is a 201-residue protein sequence, read N- to C-terminus: ATP-dependent Clp protease proteolytic subunit (201 aa).

Catalysis depends on S101, which acts as the Nucleophile. H126 is an active-site residue.

This sequence belongs to the peptidase S14 family. In terms of assembly, fourteen ClpP subunits assemble into 2 heptameric rings which stack back to back to give a disk-like structure with a central cavity, resembling the structure of eukaryotic proteasomes.

The protein localises to the cytoplasm. It carries out the reaction Hydrolysis of proteins to small peptides in the presence of ATP and magnesium. alpha-casein is the usual test substrate. In the absence of ATP, only oligopeptides shorter than five residues are hydrolyzed (such as succinyl-Leu-Tyr-|-NHMec, and Leu-Tyr-Leu-|-Tyr-Trp, in which cleavage of the -Tyr-|-Leu- and -Tyr-|-Trp bonds also occurs).. Cleaves peptides in various proteins in a process that requires ATP hydrolysis. Has a chymotrypsin-like activity. Plays a major role in the degradation of misfolded proteins. The chain is ATP-dependent Clp protease proteolytic subunit from Francisella tularensis subsp. tularensis (strain FSC 198).